Here is a 253-residue protein sequence, read N- to C-terminus: Phycocyanobilin:ferredoxin oxidoreductase (253 aa).

Belongs to the HY2 family.

The enzyme catalyses (2R,3Z)-phycocyanobilin + 4 oxidized [2Fe-2S]-[ferredoxin] = biliverdin IXalpha + 4 reduced [2Fe-2S]-[ferredoxin] + 4 H(+). In terms of biological role, catalyzes the four-electron reduction of biliverdin IX-alpha (2-electron reduction at both the A and D rings); the reaction proceeds via an isolatable 2-electron intermediate, 181,182-dihydrobiliverdin. This is Phycocyanobilin:ferredoxin oxidoreductase (pcyA) from Gloeobacter violaceus (strain ATCC 29082 / PCC 7421).